An 86-amino-acid polypeptide reads, in one-letter code: Co-chaperonin GroES (86 aa).

This sequence belongs to the GroES chaperonin family. In terms of assembly, heptamer of 7 subunits arranged in a ring. Interacts with the chaperonin GroEL.

Its subcellular location is the cytoplasm. Functionally, together with the chaperonin GroEL, plays an essential role in assisting protein folding. The GroEL-GroES system forms a nano-cage that allows encapsulation of the non-native substrate proteins and provides a physical environment optimized to promote and accelerate protein folding. GroES binds to the apical surface of the GroEL ring, thereby capping the opening of the GroEL channel. In Campylobacter jejuni subsp. doylei (strain ATCC BAA-1458 / RM4099 / 269.97), this protein is Co-chaperonin GroES.